The following is a 545-amino-acid chain: uncharacterized protein (545 aa).

Composition is skewed to basic and acidic residues over residues 34 to 44 (PMNKQNEKLKT) and 53 to 63 (PRNDYSRRVSR). 3 disordered regions span residues 34 to 98 (PMNK…PESN), 269 to 296 (QNGT…PQDS), and 415 to 444 (ERPQ…SAPE). Positions 69–78 (TDSSEQQITA) are enriched in polar residues. Over residues 415–428 (ERPQRKTEHVKTPE) the composition is skewed to basic and acidic residues. The segment covering 429–441 (ENLQTKNPTTMTS) has biased composition (polar residues).

This is an uncharacterized protein from Mus musculus (Mouse).